Reading from the N-terminus, the 857-residue chain is Protein dalmatian (857 aa).

Disordered stretches follow at residues 1 to 50 (MVRT…KLSI) and 146 to 194 (VQKS…FFHR). Polar residues-rich tracts occupy residues 146–156 (VQKSTQPQNIK) and 165–176 (SPCQQRIRSKSP). Phosphoserine occurs at positions 173, 175, 184, and 222. The segment covering 251 to 271 (GKPRAKRTAKKVRPVGNRRKV) has biased composition (basic residues). The interval 251-281 (GKPRAKRTAKKVRPVGNRRKVSTKDNEPEPV) is disordered. S405 carries the phosphoserine modification. 2 disordered regions span residues 470-514 (SICP…NAEN) and 737-830 (PPRP…RDIE). A compositionally biased stretch (basic and acidic residues) spans 771–781 (KQPRRTYVKER). The span at 797–806 (SESEDEDEQD) shows a compositional bias: acidic residues. Basic and acidic residues predominate over residues 807–816 (SHDKSLDSPE). The segment covering 817–826 (KKRHHVKRPR) has biased composition (basic residues).

The protein localises to the nucleus. It is found in the chromosome. Regulator of sister chromatid cohesion in mitosis. Probably involved in development of the central nervous system. This Drosophila melanogaster (Fruit fly) protein is Protein dalmatian (dmt).